A 223-amino-acid chain; its full sequence is DNA mismatch repair protein MutH (223 aa).

The protein belongs to the MutH family.

Its subcellular location is the cytoplasm. Sequence-specific endonuclease that cleaves unmethylated GATC sequences. It is involved in DNA mismatch repair. The polypeptide is DNA mismatch repair protein MutH (Haemophilus influenzae (strain PittEE)).